Reading from the N-terminus, the 245-residue chain is NAD-dependent protein deacetylase (245 aa).

Positions 1-245 constitute a Deacetylase sirtuin-type domain; sequence MIFVQQFEEV…EFVEGLSSIK (245 aa). Residues Ala-26, Thr-30, Phe-37, Arg-38, Gln-105, Ile-107, Asp-108, and His-123 each coordinate NAD(+). Phe-37 contributes to the nicotinamide binding site. Nicotinamide-binding residues include Ile-107 and Asp-108. The active-site Proton acceptor is His-123. Positions 131, 134, 151, and 154 each coordinate Zn(2+). Thr-190, Ser-191, Asn-216, and Ile-234 together coordinate NAD(+).

This sequence belongs to the sirtuin family. Class U subfamily. It depends on Zn(2+) as a cofactor.

Its subcellular location is the cytoplasm. The enzyme catalyses N(6)-acetyl-L-lysyl-[protein] + NAD(+) + H2O = 2''-O-acetyl-ADP-D-ribose + nicotinamide + L-lysyl-[protein]. Its function is as follows. NAD-dependent protein deacetylase which modulates the activities of several enzymes which are inactive in their acetylated form. The polypeptide is NAD-dependent protein deacetylase (Bacillus thuringiensis subsp. konkukian (strain 97-27)).